Consider the following 357-residue polypeptide: Histidinol-phosphate aminotransferase 2 (357 aa).

An N6-(pyridoxal phosphate)lysine modification is found at K216.

This sequence belongs to the class-II pyridoxal-phosphate-dependent aminotransferase family. Histidinol-phosphate aminotransferase subfamily. As to quaternary structure, homodimer. Pyridoxal 5'-phosphate serves as cofactor.

The enzyme catalyses L-histidinol phosphate + 2-oxoglutarate = 3-(imidazol-4-yl)-2-oxopropyl phosphate + L-glutamate. Its pathway is amino-acid biosynthesis; L-histidine biosynthesis; L-histidine from 5-phospho-alpha-D-ribose 1-diphosphate: step 7/9. The protein is Histidinol-phosphate aminotransferase 2 of Idiomarina loihiensis (strain ATCC BAA-735 / DSM 15497 / L2-TR).